We begin with the raw amino-acid sequence, 185 residues long: NEDD8-conjugating enzyme UBE2F (185 aa).

Residues 1 to 29 form an interaction with uba3 region; the sequence is MLTLASKLKREEGVRAGRTPAGSNDAAHR. A UBC core domain is found at 32–185; it reads IRDRLLIKEV…VQDFIKNYAR (154 aa). C116 functions as the Glycyl thioester intermediate in the catalytic mechanism.

This sequence belongs to the ubiquitin-conjugating enzyme family. UBE2F subfamily.

It catalyses the reaction [E1 NEDD8-activating enzyme]-S-[NEDD8 protein]-yl-L-cysteine + [E2 NEDD8-conjugating enzyme]-L-cysteine = [E1 NEDD8-activating enzyme]-L-cysteine + [E2 NEDD8-conjugating enzyme]-S-[NEDD8-protein]-yl-L-cysteine.. It participates in protein modification; protein neddylation. In terms of biological role, accepts the ubiquitin-like protein NEDD8 from the UBA3-NAE1 E1 complex and catalyzes its covalent attachment to other proteins. Together with the E3 ubiquitin ligase rnf7/rbx2, specifically neddylates cullin-5 (cul5). Does not neddylate cul1, cul2, cul3, cul4a or cul4b. This chain is NEDD8-conjugating enzyme UBE2F (ube2f), found in Danio rerio (Zebrafish).